A 164-amino-acid chain; its full sequence is Protein-export protein SecB (164 aa).

The protein belongs to the SecB family. In terms of assembly, homotetramer, a dimer of dimers. One homotetramer interacts with 1 SecA dimer.

The protein resides in the cytoplasm. In terms of biological role, one of the proteins required for the normal export of preproteins out of the cell cytoplasm. It is a molecular chaperone that binds to a subset of precursor proteins, maintaining them in a translocation-competent state. It also specifically binds to its receptor SecA. This Zymomonas mobilis subsp. mobilis (strain ATCC 31821 / ZM4 / CP4) protein is Protein-export protein SecB.